The sequence spans 189 residues: Riboflavin kinase (189 aa).

The Mg(2+) site is built by threonine 42 and asparagine 44. Glutamate 124 (nucleophile) is an active-site residue.

It belongs to the flavokinase family. It depends on Zn(2+) as a cofactor. Requires Mg(2+) as cofactor.

It catalyses the reaction riboflavin + ATP = FMN + ADP + H(+). It participates in cofactor biosynthesis; FMN biosynthesis; FMN from riboflavin (ATP route): step 1/1. Functionally, catalyzes the phosphorylation of riboflavin (vitamin B2) to form flavin mononucleotide (FMN) coenzyme. This Candida glabrata (strain ATCC 2001 / BCRC 20586 / JCM 3761 / NBRC 0622 / NRRL Y-65 / CBS 138) (Yeast) protein is Riboflavin kinase (FMN1).